An 84-amino-acid chain; its full sequence is Large ribosomal subunit protein bL27 (84 aa).

Positions 1 to 22 are disordered; that stretch reads MAHKKGASSTRNGRDSNAQRLG. Residues 7–19 are compositionally biased toward polar residues; it reads ASSTRNGRDSNAQ.

Belongs to the bacterial ribosomal protein bL27 family.

The sequence is that of Large ribosomal subunit protein bL27 from Streptomyces avermitilis (strain ATCC 31267 / DSM 46492 / JCM 5070 / NBRC 14893 / NCIMB 12804 / NRRL 8165 / MA-4680).